Here is a 139-residue protein sequence, read N- to C-terminus: D-ribose pyranase (139 aa).

Histidine 20 acts as the Proton donor in catalysis. Residues aspartate 28, histidine 106, and 128–130 (YAN) each bind substrate.

It belongs to the RbsD / FucU family. RbsD subfamily. Homodecamer.

Its subcellular location is the cytoplasm. The enzyme catalyses beta-D-ribopyranose = beta-D-ribofuranose. It functions in the pathway carbohydrate metabolism; D-ribose degradation; D-ribose 5-phosphate from beta-D-ribopyranose: step 1/2. Functionally, catalyzes the interconversion of beta-pyran and beta-furan forms of D-ribose. The chain is D-ribose pyranase from Enterobacter sp. (strain 638).